Reading from the N-terminus, the 444-residue chain is Tol-Pal system protein TolB (444 aa).

A signal peptide spans 1–26; sequence MTLFRTLAPMGLALALLLPAAVPAAA. Residues 281-310 show a composition bias toward polar residues; the sequence is IYTLDTGSGTRRQLTNSPSIETAPSYSPDG. The tract at residues 281–311 is disordered; that stretch reads IYTLDTGSGTRRQLTNSPSIETAPSYSPDGS.

This sequence belongs to the TolB family. As to quaternary structure, the Tol-Pal system is composed of five core proteins: the inner membrane proteins TolA, TolQ and TolR, the periplasmic protein TolB and the outer membrane protein Pal. They form a network linking the inner and outer membranes and the peptidoglycan layer.

It is found in the periplasm. Functionally, part of the Tol-Pal system, which plays a role in outer membrane invagination during cell division and is important for maintaining outer membrane integrity. This chain is Tol-Pal system protein TolB, found in Cereibacter sphaeroides (strain ATCC 17029 / ATH 2.4.9) (Rhodobacter sphaeroides).